Reading from the N-terminus, the 522-residue chain is Involucrin (522 aa).

A compositionally biased stretch (polar residues) spans Met1 to Leu15. 3 disordered regions span residues Met1–Glu126, Gln159–Gln329, and Gln366–Leu496. Residues Glu76 to His91 are compositionally biased toward low complexity. Residues Trp92–Glu126 are compositionally biased toward basic and acidic residues. Low complexity predominate over residues Gln169–Gly181. Basic and acidic residues-rich tracts occupy residues Gln182–Gln198, Lys214–Gly231, Gln252–Glu264, Lys274–Glu290, and Gln305–Leu323. The segment covering Gln375–Gln389 has biased composition (low complexity). Basic and acidic residues-rich tracts occupy residues Lys391 to Glu401, Gln409 to Ala418, and Lys431 to Gln465. Residues Gln466–Gln479 show a composition bias toward low complexity.

This sequence belongs to the involucrin family. Directly or indirectly cross-linked to cornifelin (CNFN). Post-translationally, substrate of transglutaminase. Specific glutamines or lysines are cross-linked to keratins, desmoplakin and to inter involucrin molecules. In terms of tissue distribution, keratinocytes of epidermis and other stratified squamous epithelia.

Its subcellular location is the cytoplasm. Functionally, part of the insoluble cornified cell envelope (CE) of stratified squamous epithelia. The protein is Involucrin (IVL) of Hylobates lar (Lar gibbon).